Consider the following 302-residue polypeptide: uncharacterized protein (302 aa).

The next 9 helical transmembrane spans lie at 1–21, 33–53, 67–87, 101–121, 124–144, 185–205, 220–240, 253–273, and 274–294; these read MSWI…LGVI, SLLF…YIYY, FLIE…IFQF, FGII…IILI, FSWL…KTFY, YVTP…VFAI, IIYT…FCLA, LALI…IAIP, and AYIS…ASVI.

Belongs to the TerC family.

The protein resides in the cell membrane. This is an uncharacterized protein from Rickettsia bellii (strain RML369-C).